Reading from the N-terminus, the 483-residue chain is Essential nuclear protein 1 (483 aa).

Disordered stretches follow at residues 1–21 (MARA…LKDL), 33–55 (KKKL…GYID), 67–123 (KEQQ…EGDY), and 171–200 (ESQV…GLKS). The segment covering 96–123 (YDDEDEDEDEDEEAFGEDISDFEPEGDY) has biased composition (acidic residues). Position 172 is a phosphoserine; by ATM or ATR (Ser-172). Residues 174–183 (VEDMQDDEPL) are compositionally biased toward acidic residues. Polar residues predominate over residues 185 to 198 (NEQNTSRGNISSGL). Phosphoserine is present on residues Ser-190 and Ser-404.

The protein belongs to the bystin family.

It localises to the cytoplasm. It is found in the nucleus. The protein localises to the nucleolus. Required for normal export of the pre-40S particles from the nucleus to the cytoplasm. Its subcellular location and association with pre-40S subunit shifts from mixed cytoplasm/nucleus to all nuclear in RPS19 disruptions, suggesting it acts after the ribosomal protein. The chain is Essential nuclear protein 1 (ENP1) from Saccharomyces cerevisiae (strain ATCC 204508 / S288c) (Baker's yeast).